We begin with the raw amino-acid sequence, 351 residues long: Ion-translocating oxidoreductase complex subunit D (351 aa).

Helical transmembrane passes span 37 to 57, 88 to 108, and 123 to 143; these read YFFG…AILA, AIPP…AIVI, and PAMA…TTWL. The residue at position 187 (threonine 187) is an FMN phosphoryl threonine. The next 4 membrane-spanning stretches (helical) occupy residues 214–234, 241–261, 270–290, and 300–317; these read FAGL…LFLL, WHIP…FAVF, IFNL…TDPV, and LYYG…RSWG.

The protein belongs to the NqrB/RnfD family. The complex is composed of six subunits: RnfA, RnfB, RnfC, RnfD, RnfE and RnfG. FMN is required as a cofactor.

The protein localises to the cell inner membrane. In terms of biological role, part of a membrane-bound complex that couples electron transfer with translocation of ions across the membrane. This chain is Ion-translocating oxidoreductase complex subunit D, found in Aliivibrio salmonicida (strain LFI1238) (Vibrio salmonicida (strain LFI1238)).